We begin with the raw amino-acid sequence, 748 residues long: E3 ubiquitin-protein ligase SMURF2 (748 aa).

The C2 domain occupies 1-119 (MSNPGGRRNG…TGYQRLDLCK (119 aa)). A Glycyl lysine isopeptide (Lys-Gly) (interchain with G-Cter in ubiquitin) cross-link involves residue lysine 119. WW domains follow at residues 157 to 190 (NDLP…RPTR), 251 to 284 (PDLP…DPRV), and 297 to 330 (GPLP…DPRL). The HECT domain occupies 414 to 748 (RPKDLWKRLM…IEETCGFAVE (335 aa)). Cysteine 716 (glycyl thioester intermediate) is an active-site residue.

As to quaternary structure, interacts (via WW domains) with SMAD1. Interacts (via WW domains) with SMAD2 (via PY-motif). Interacts (via WW domains) with SMAD3 (via PY-motif). Interacts with SMAD6. Interacts with SMAD7 (via PY-motif) and TGFBR1; SMAD7 recruits SMURF2 to the TGF-beta receptor and regulates its degradation. Does not interact with SMAD4; SMAD4 lacks a PY-motif. Interacts with AIMP1. Interacts with SNON. Interacts with STAMBP and RNF11. May interact with NDFIP1 and NDFIP2; this interaction induces the E3 ubiquitin-protein ligase activity. Interacts with TTC3. In terms of assembly, (Microbial infection) Interacts (via WW domains) with EBOV and MARV VP40 (via PPXY motif); the interaction facilitates VP40 virus-like particle budding. In terms of processing, auto-ubiquitinated and ubiquitinated in the presence of RNF11 and UBE2D1. Ubiquitinated by the SCF(FBXL15) complex and TTC3, leading to its degradation by the proteasome. 'Lys-48'-linked polyubiquitination mediated by TRAF4 at Lys-119 leads to SMURF2 proteasomal degradation. Widely expressed.

The protein resides in the nucleus. The protein localises to the cytoplasm. It localises to the cell membrane. It is found in the membrane raft. The enzyme catalyses S-ubiquitinyl-[E2 ubiquitin-conjugating enzyme]-L-cysteine + [acceptor protein]-L-lysine = [E2 ubiquitin-conjugating enzyme]-L-cysteine + N(6)-ubiquitinyl-[acceptor protein]-L-lysine.. It participates in protein modification; protein ubiquitination. Its activity is regulated as follows. Activated by NDFIP1- and NDFIP2-binding. Its function is as follows. E3 ubiquitin-protein ligase which accepts ubiquitin from an E2 ubiquitin-conjugating enzyme in the form of a thioester and then directly transfers the ubiquitin to targeted substrates. Interacts with SMAD7 to trigger SMAD7-mediated transforming growth factor beta/TGF-beta receptor ubiquitin-dependent degradation, thereby down-regulating TGF-beta signaling. In addition, interaction with SMAD7 activates autocatalytic degradation, which is prevented by interaction with AIMP1. Also forms a stable complex with TGF-beta receptor-mediated phosphorylated SMAD1, SMAD2 and SMAD3, and targets SMAD1 and SMAD2 for ubiquitination and proteasome-mediated degradation. SMAD2 may recruit substrates, such as SNON, for ubiquitin-dependent degradation. Negatively regulates TGFB1-induced epithelial-mesenchymal transition and myofibroblast differentiation. In terms of biological role, (Microbial infection) In case of filoviruses Ebola/EBOV and Marburg/MARV infection, the complex formed by viral matrix protein VP40 and SMURF2 facilitates virus budding. This Homo sapiens (Human) protein is E3 ubiquitin-protein ligase SMURF2.